The chain runs to 239 residues: Ribonuclease 3 (239 aa).

The 126-residue stretch at 12–137 folds into the RNase III domain; the sequence is RLTLEAAIGH…LIAALYLDGG (126 aa). Glutamate 50 is a Mg(2+) binding site. Aspartate 54 is an active-site residue. Positions 123 and 126 each coordinate Mg(2+). Glutamate 126 is a catalytic residue. The region spanning 162–231 is the DRBM domain; it reads DAKTELQEWA…ATRILEREGI (70 aa).

It belongs to the ribonuclease III family. In terms of assembly, homodimer. Requires Mg(2+) as cofactor.

The protein localises to the cytoplasm. The enzyme catalyses Endonucleolytic cleavage to 5'-phosphomonoester.. Digests double-stranded RNA. Involved in the processing of primary rRNA transcript to yield the immediate precursors to the large and small rRNAs (23S and 16S). Processes some mRNAs, and tRNAs when they are encoded in the rRNA operon. Processes pre-crRNA and tracrRNA of type II CRISPR loci if present in the organism. The sequence is that of Ribonuclease 3 from Rhizobium rhizogenes (strain K84 / ATCC BAA-868) (Agrobacterium radiobacter).